The chain runs to 675 residues: DNA ligase (675 aa).

Residues 35–39, 84–85, and Glu116 contribute to the NAD(+) site; these read DEAYD and SL. The N6-AMP-lysine intermediate role is filled by Lys118. Residues Arg139, Glu180, Lys296, and Lys320 each coordinate NAD(+). Residues Cys414, Cys417, Cys432, and Cys437 each contribute to the Zn(2+) site. In terms of domain architecture, BRCT spans 597 to 675; the sequence is PVDAFWNGKT…EREFLERLGM (79 aa).

The protein belongs to the NAD-dependent DNA ligase family. LigA subfamily. Mg(2+) serves as cofactor. The cofactor is Mn(2+).

It catalyses the reaction NAD(+) + (deoxyribonucleotide)n-3'-hydroxyl + 5'-phospho-(deoxyribonucleotide)m = (deoxyribonucleotide)n+m + AMP + beta-nicotinamide D-nucleotide.. DNA ligase that catalyzes the formation of phosphodiester linkages between 5'-phosphoryl and 3'-hydroxyl groups in double-stranded DNA using NAD as a coenzyme and as the energy source for the reaction. It is essential for DNA replication and repair of damaged DNA. The polypeptide is DNA ligase (Syntrophobacter fumaroxidans (strain DSM 10017 / MPOB)).